A 78-amino-acid chain; its full sequence is Putative DPH3 homolog B (78 aa).

The DPH-type MB domain maps to 4 to 60 (FHDEVEIEDFQYDEDSETYFCPCPCGDNFSITKEELENGEGVAMCPGCSLIIKVIYD). Positions 26, 28, 48, and 51 each coordinate Zn(2+).

Belongs to the DPH3 family.

The polypeptide is Putative DPH3 homolog B (DPH3P1) (Homo sapiens (Human)).